A 208-amino-acid polypeptide reads, in one-letter code: Imidazole glycerol phosphate synthase subunit HisH (208 aa).

The 206-residue stretch at 1–206 folds into the Glutamine amidotransferase type-1 domain; it reads MIVIIDYDTG…KEVIRSCKSS (206 aa). Cys-79 functions as the Nucleophile in the catalytic mechanism. Catalysis depends on residues His-181 and Glu-183.

As to quaternary structure, heterodimer of HisH and HisF.

Its subcellular location is the cytoplasm. It carries out the reaction 5-[(5-phospho-1-deoxy-D-ribulos-1-ylimino)methylamino]-1-(5-phospho-beta-D-ribosyl)imidazole-4-carboxamide + L-glutamine = D-erythro-1-(imidazol-4-yl)glycerol 3-phosphate + 5-amino-1-(5-phospho-beta-D-ribosyl)imidazole-4-carboxamide + L-glutamate + H(+). The enzyme catalyses L-glutamine + H2O = L-glutamate + NH4(+). It participates in amino-acid biosynthesis; L-histidine biosynthesis; L-histidine from 5-phospho-alpha-D-ribose 1-diphosphate: step 5/9. IGPS catalyzes the conversion of PRFAR and glutamine to IGP, AICAR and glutamate. The HisH subunit catalyzes the hydrolysis of glutamine to glutamate and ammonia as part of the synthesis of IGP and AICAR. The resulting ammonia molecule is channeled to the active site of HisF. The sequence is that of Imidazole glycerol phosphate synthase subunit HisH from Listeria welshimeri serovar 6b (strain ATCC 35897 / DSM 20650 / CCUG 15529 / CIP 8149 / NCTC 11857 / SLCC 5334 / V8).